We begin with the raw amino-acid sequence, 175 residues long: Transcriptional repressor NrdR (175 aa).

Residues 3–32 fold into a zinc finger; the sequence is CPYCSHPDTKVIDSRDVDDGVRRRRECVVC. Positions 47 to 137 constitute an ATP-cone domain; it reads LFVVKKDQRR…VYREFTDITQ (91 aa).

This sequence belongs to the NrdR family. The cofactor is Zn(2+).

Negatively regulates transcription of bacterial ribonucleotide reductase nrd genes and operons by binding to NrdR-boxes. In Dehalococcoides mccartyi (strain ATCC BAA-2266 / KCTC 15142 / 195) (Dehalococcoides ethenogenes (strain 195)), this protein is Transcriptional repressor NrdR.